We begin with the raw amino-acid sequence, 70 residues long: MPEDKKAAAKVEPLRKTRPCPECGKPSNREHYPFCSNRCREADLSRWLTGAYAIPVADDETKAEYPDGEN.

Over residues 1-15 (MPEDKKAAAKVEPLR) the composition is skewed to basic and acidic residues. The tract at residues 1–22 (MPEDKKAAAKVEPLRKTRPCPE) is disordered. Zn(2+) contacts are provided by Cys-20, Cys-23, Cys-35, and Cys-39.

Belongs to the DNA gyrase inhibitor YacG family. As to quaternary structure, interacts with GyrB. Requires Zn(2+) as cofactor.

In terms of biological role, inhibits all the catalytic activities of DNA gyrase by preventing its interaction with DNA. Acts by binding directly to the C-terminal domain of GyrB, which probably disrupts DNA binding by the gyrase. The protein is DNA gyrase inhibitor YacG of Rhizobium johnstonii (strain DSM 114642 / LMG 32736 / 3841) (Rhizobium leguminosarum bv. viciae).